A 291-amino-acid polypeptide reads, in one-letter code: 3-hydroxy-5-phosphonooxypentane-2,4-dione thiolase (291 aa).

The Schiff-base intermediate with substrate role is filled by Lys203.

This sequence belongs to the DeoC/FbaB aldolase family. In terms of assembly, homodecamer.

It is found in the cytoplasm. It catalyses the reaction dihydroxyacetone phosphate + acetyl-CoA = 3-hydroxy-2,4-dioxopentyl phosphate + CoA. Involved in the degradation of phospho-AI-2, thereby terminating induction of the lsr operon and closing the AI-2 signaling cycle. Catalyzes the transfer of an acetyl moiety from 3-hydroxy-5-phosphonooxypentane-2,4-dione to CoA to form glycerone phosphate and acetyl-CoA. The chain is 3-hydroxy-5-phosphonooxypentane-2,4-dione thiolase from Photorhabdus laumondii subsp. laumondii (strain DSM 15139 / CIP 105565 / TT01) (Photorhabdus luminescens subsp. laumondii).